Reading from the N-terminus, the 2005-residue chain is Sodium channel protein type 2 subunit alpha (2005 aa).

The Cytoplasmic segment spans residues 1–129; the sequence is MAQSVLVPPG…KLAIKILVHS (129 aa). At Ser4 the chain carries Phosphoserine. Positions 28–61 are disordered; that stretch reads RIAEEKAKRPKQERKDEDDENGPKPNSDLEAGKS. A Glycyl lysine isopeptide (Lys-Gly) (interchain with G-Cter in SUMO1) cross-link involves residue Lys38. Residues 111–456 form an I repeat; that stretch reads ILTPFNPIRK…QQMLEQLKKQ (346 aa). The helical transmembrane segment at 130-148 threads the bilayer; that stretch reads LFNMLIMCTILTNCVFMTM. Topologically, residues 149–155 are extracellular; it reads SNPPDWT. A helical membrane pass occupies residues 156-176; the sequence is KNVEYTFTGIYTFESLIKILA. Over 177-190 the chain is Cytoplasmic; it reads RGFCLEDFTFLRDP. A helical transmembrane segment spans residues 191–208; sequence WNWLDFTVITFAYVTEFV. The Extracellular portion of the chain corresponds to 209–214; it reads DLGNVS. Asn212 carries an N-linked (GlcNAc...) asparagine glycan. A helical transmembrane segment spans residues 215–231; sequence ALRTFRVLRALKTISVI. The Cytoplasmic portion of the chain corresponds to 232–250; that stretch reads PGLKTIVGALIQSVKKLSD. The chain crosses the membrane as a helical span at residues 251 to 270; the sequence is VMILTVFCLSVFALIGLQLF. The Extracellular segment spans residues 271-369; that stretch reads MGNLRNKCLQ…PNYGYTSFDT (99 aa). An intrachain disulfide couples Cys278 to Cys338. Asn285, Asn291, Asn297, Asn303, Asn308, and Asn340 each carry an N-linked (GlcNAc...) asparagine glycan. The segment at residues 370 to 394 is an intramembrane region (pore-forming); sequence FSWAFLSLFRLMTQDFWENLYQLTL. The Extracellular segment spans residues 395–401; that stretch reads RAAGKTY. The chain crosses the membrane as a helical span at residues 402-422; it reads MIFFVLVIFLGSFYLINLILA. Over 423–759 the chain is Cytoplasmic; it reads VVAMAYEEQN…HLVNLVVMDP (337 aa). Phosphoserine occurs at positions 468, 471, 484, 526, 528, 531, 553, 554, 558, 573, 576, 589, 610, 623, 686, 687, and 721. A disordered region spans residues 494–529; that stretch reads SSKSEKELKNRRKKKKQKEQSGEEEKNDRVRKSESE. The segment covering 511–529 has biased composition (basic and acidic residues); it reads KEQSGEEEKNDRVRKSESE. The segment at 590–610 is disordered; that stretch reads ENDFADDEHSTFEDNDSRRDS. Residues 596-610 show a composition bias toward basic and acidic residues; sequence DEHSTFEDNDSRRDS. The II repeat unit spans residues 741-1013; the sequence is CCKPWLKVKH…QIAVGRMQKG (273 aa). Residues 760 to 778 form a helical membrane-spanning segment; that stretch reads FVDLAITICIVLNTLFMAM. Residues 779–789 are Extracellular-facing; it reads EHYPMTEQFSS. A helical transmembrane segment spans residues 790–809; the sequence is VLSVGNLVFTGIFTAEMFLK. At 810–823 the chain is on the cytoplasmic side; that stretch reads IIAMDPYYYFQEGW. The helical transmembrane segment at 824-843 threads the bilayer; sequence NIFDGFIVSLSLMELGLANV. Residues 844-845 lie on the Extracellular side of the membrane; that stretch reads EG. Residues 846–863 traverse the membrane as a helical segment; that stretch reads LSVLRSFRLLRVFKLAKS. Residues 864 to 879 are Cytoplasmic-facing; sequence WPTLNMLIKIIGNSVG. Residues 880–898 form a helical membrane-spanning segment; it reads ALGNLTLVLAIIVFIFAVV. Over 899-927 the chain is Extracellular; it reads GMQLFGKSYKECVCKISNDCELPRWHMHD. A disulfide bridge connects residues Cys912 and Cys918. The tract at residues 917 to 918 is binds SCN2B; the sequence is DC. The segment at residues 928-948 is an intramembrane region (pore-forming); sequence FFHSFLIVFRVLCGEWIETMW. The Extracellular segment spans residues 949–961; the sequence is DCMEVAGQTMCLT. Cys950 and Cys959 are disulfide-bonded. The chain crosses the membrane as a helical span at residues 962–982; that stretch reads VFMMVMVIGNLVVLNLFLALL. Topologically, residues 983-1209 are cytoplasmic; sequence LSSFSSDNLA…TCYKIVEHNW (227 aa). Residues 1120 to 1165 form a disordered region; that stretch reads EEFSSESDMEESKEKLNATSSSEGSTVDIGAPAEGEQPEVEPEESL. Residues 1155–1165 show a composition bias toward acidic residues; that stretch reads EQPEVEPEESL. Residues 1190–1504 form an III repeat; it reads KGKLWWNLRK…KKYYNAMKKL (315 aa). A helical membrane pass occupies residues 1210-1227; the sequence is FETFIVFMILLSSGALAF. Over 1228-1240 the chain is Extracellular; it reads EDIYIEQRKTIKT. Residues 1241–1259 traverse the membrane as a helical segment; sequence MLEYADKVFTYIFILEMLL. At 1260–1273 the chain is on the cytoplasmic side; that stretch reads KWVAYGFQVYFTNA. The helical transmembrane segment at 1274-1292 threads the bilayer; sequence WCWLDFLIVDVSLVSLTAN. At 1293-1300 the chain is on the extracellular side; sequence ALGYSELG. The helical transmembrane segment at 1301-1319 threads the bilayer; it reads AIKSLRTLRALRPLRALSR. Over 1320-1336 the chain is Cytoplasmic; the sequence is FEGMRVVVNALLGAIPS. Residues 1337 to 1356 traverse the membrane as a helical segment; the sequence is IMNVLLVCLIFWLIFSIMGV. At 1357–1408 the chain is on the extracellular side; the sequence is NLFAGKFYHCINYTTGEMFDVSVVNNYSECKALIESNQTARWKNVKVNFDNV. Cys1366 and Cys1386 are joined by a disulfide. Residues Asn1368, Asn1382, and Asn1393 are each glycosylated (N-linked (GlcNAc...) asparagine). Positions 1409 to 1430 form an intramembrane region, pore-forming; it reads GLGYLSLLQVATFKGWMDIMYA. At 1431-1447 the chain is on the extracellular side; it reads AVDSRNVELQPKYEDNL. Residues 1448-1469 form a helical membrane-spanning segment; sequence YMYLYFVIFIIFGSFFTLNLFI. At 1470–1532 the chain is on the cytoplasmic side; the sequence is GVIIDNFNQQ…MVFDFVTKQV (63 aa). Residue Ser1506 is modified to Phosphoserine; by PKC. One copy of the IV repeat lies at 1513 to 1811; that stretch reads IPRPANKFQG…WEKFDPDATQ (299 aa). Residues 1533 to 1550 form a helical membrane-spanning segment; that stretch reads FDISIMILICLNMVTMMV. Residues 1551–1561 lie on the Extracellular side of the membrane; the sequence is ETDDQSQEMTN. Residues 1562–1580 form a helical membrane-spanning segment; sequence ILYWINLVFIVLFTGECVL. At 1581-1592 the chain is on the cytoplasmic side; that stretch reads KLISLRYYYFTI. Residues 1593 to 1610 traverse the membrane as a helical segment; it reads GWNIFDFVVVILSIVGMF. Residues 1611–1623 are Extracellular-facing; sequence LAELIEKYFVSPT. Residues 1624–1640 form a helical membrane-spanning segment; sequence LFRVIRLARIGRILRLI. Topologically, residues 1641–1659 are cytoplasmic; it reads KGAKGIRTLLFALMMSLPA. A helical transmembrane segment spans residues 1660 to 1677; sequence LFNIGLLLFLVMFIYAIF. At 1678-1699 the chain is on the extracellular side; the sequence is GMSNFAYVKREVGIDDMFNFET. The segment at residues 1700–1722 is an intramembrane region (pore-forming); that stretch reads FGNSMICLFQITTSAGWDGLLAP. Topologically, residues 1723 to 1752 are extracellular; sequence ILNSGPPDCDPDKDHPGSSVKGDCGNPSVG. Cys1731 and Cys1746 are disulfide-bonded. Residues 1753-1775 traverse the membrane as a helical segment; the sequence is IFFFVSYIIISFLVVVNMYIAVI. At 1776–2005 the chain is on the cytoplasmic side; that stretch reads LENFSVATEE…KGKDIRESKK (230 aa). The IQ domain maps to 1905-1934; sequence EEVSAIIIQRAYRRYLLKQKVKKVSSIYKK. Ser1930 carries the post-translational modification Phosphoserine. Residues 1935-1964 show a composition bias toward basic and acidic residues; sequence DKGKECDGTPIKEDTLIDKLNENSTPEKTD. A disordered region spans residues 1935 to 2005; it reads DKGKECDGTP…KGKDIRESKK (71 aa). A phosphothreonine mark is found at Thr1943, Thr1963, and Thr1966. Ser1971 carries the phosphoserine modification. A compositionally biased stretch (basic and acidic residues) spans 1979–2005; sequence TKPEKEKFEKDKSEKEDKGKDIRESKK.

It belongs to the sodium channel (TC 1.A.1.10) family. Nav1.2/SCN2A subfamily. In terms of assembly, heterooligomer of a large alpha subunit and a smaller beta subunit. Heterooligomer with SCN2B or SCN4B; disulfide-linked. Heterooligomer with SCN1B or SCN3B; non-covalently linked. Interacts with NEDD4L. Interacts with CALM. Interacts with TMEM233. Interacts with the conotoxin GVIIJ. Interacts with the spider beta/delta-theraphotoxin-Pre1a. Interacts with the conotoxin KIIIA. Interacts with the spider protoxin-II. May be ubiquitinated by NEDD4L; which would promote its endocytosis. Post-translationally, phosphorylation at Ser-1506 by PKC in a highly conserved cytoplasmic loop slows inactivation of the sodium channel and reduces peak sodium currents. In terms of processing, sumoylated at Lys-38. Sumoylation is induced by hypoxia, increases voltage-gated sodium current and mediates the early response to acute hypoxia in neurons. Sumoylated SCN2A is located at the cell membrane.

Its subcellular location is the cell membrane. The catalysed reaction is Na(+)(in) = Na(+)(out). In terms of biological role, mediates the voltage-dependent sodium ion permeability of excitable membranes. Assuming opened or closed conformations in response to the voltage difference across the membrane, the protein forms a sodium-selective channel through which Na(+) ions may pass in accordance with their electrochemical gradient. Implicated in the regulation of hippocampal replay occurring within sharp wave ripples (SPW-R) important for memory. The chain is Sodium channel protein type 2 subunit alpha from Homo sapiens (Human).